The chain runs to 222 residues: Large ribosomal subunit protein mL64 (222 aa).

Disordered regions lie at residues 1–51, 136–170, and 182–222; these read MAAP…PRWQ, RRQQQARREKAQADKERRARLQAEAQERLGYHVDP, and LEKQ…TPDS. Over residues 141–170 the composition is skewed to basic and acidic residues; that stretch reads ARREKAQADKERRARLQAEAQERLGYHVDP. The stretch at 144–213 forms a coiled coil; it reads EKAQADKERR…AAMAAAAAQD (70 aa). The short motif at 184 to 200 is the Nuclear localization signal element; sequence KQHRKRLKEEKQRKKKE. The segment covering 203-212 has biased composition (low complexity); the sequence is AAAMAAAAAQ.

Belongs to the mitochondrion-specific ribosomal protein mL64 family. In terms of assembly, component of the mitochondrial ribosome large subunit (39S) which comprises a 16S rRNA and about 50 distinct proteins. Interacts with GADD45A, GADD45B and GADD45G. Interacts with NR4A1 via the NR4A1 AB domain. Interacts with ATAD3A and ATAD3B.

It localises to the mitochondrion. It is found in the nucleus. Functionally, acts as a negative regulator of G1 to S cell cycle phase progression by inhibiting cyclin-dependent kinases. Inhibitory effects are additive with GADD45 proteins but also occur in the absence of GADD45 proteins. Acts as a repressor of the orphan nuclear receptor NR4A1 by inhibiting AB domain-mediated transcriptional activity. May be involved in the hormone-mediated regulation of NR4A1 transcriptional activity. May play a role in mitochondrial protein synthesis. The chain is Large ribosomal subunit protein mL64 (GADD45GIP1) from Bos taurus (Bovine).